A 423-amino-acid polypeptide reads, in one-letter code: Pseudouridylate synthase 1 homolog (423 aa).

Residues 32–75 (AGNKVPPALASHQPDRKGRGGWVWEETEHPAKRVKGGEDEEPPR) form a disordered region. Positions 57–68 (ETEHPAKRVKGG) are enriched in basic and acidic residues. The active-site Nucleophile is the Asp142. Positions 403–423 (ADTGAKVPSSLEGSEGDGDTD) are disordered. Residues Ser411 and Ser416 each carry the phosphoserine modification. At Thr422 the chain carries Phosphothreonine.

The protein belongs to the tRNA pseudouridine synthase TruA family. In terms of assembly, monomer. Forms a complex with RARG and the SRA1 RNA in the nucleus.

The protein localises to the nucleus. The protein resides in the cytoplasm. It localises to the mitochondrion. It catalyses the reaction a uridine in tRNA = a pseudouridine in tRNA. The enzyme catalyses uridine(38/39/40) in tRNA = pseudouridine(38/39/40) in tRNA. The catalysed reaction is a uridine in mRNA = a pseudouridine in mRNA. Pseudouridylate synthase that catalyzes pseudouridylation of tRNAs and mRNAs. Acts on positions 27/28 in the anticodon stem and also positions 34 and 36 in the anticodon of an intron containing tRNA. Also catalyzes pseudouridylation of mRNAs: mediates pseudouridylation of mRNAs with the consensus sequence 5'-UGUAG-3'. Acts as a regulator of pre-mRNA splicing by mediating pseudouridylation of pre-mRNAs at locations associated with alternatively spliced regions. Pseudouridylation of pre-mRNAs near splice sites directly regulates mRNA splicing and mRNA 3'-end processing. Involved in regulation of nuclear receptor activity through pseudouridylation of SRA1 mRNA. In terms of biological role, does not form pseudouridine when expressed in vitro. This Mus musculus (Mouse) protein is Pseudouridylate synthase 1 homolog.